The sequence spans 293 residues: 4-hydroxy-tetrahydrodipicolinate synthase (293 aa).

Threonine 44 contacts pyruvate. The active-site Proton donor/acceptor is the tyrosine 132. Lysine 162 (schiff-base intermediate with substrate) is an active-site residue. Position 204 (isoleucine 204) interacts with pyruvate.

Belongs to the DapA family. In terms of assembly, homotetramer; dimer of dimers.

The protein localises to the cytoplasm. It carries out the reaction L-aspartate 4-semialdehyde + pyruvate = (2S,4S)-4-hydroxy-2,3,4,5-tetrahydrodipicolinate + H2O + H(+). It functions in the pathway amino-acid biosynthesis; L-lysine biosynthesis via DAP pathway; (S)-tetrahydrodipicolinate from L-aspartate: step 3/4. Catalyzes the condensation of (S)-aspartate-beta-semialdehyde [(S)-ASA] and pyruvate to 4-hydroxy-tetrahydrodipicolinate (HTPA). In Erythrobacter litoralis (strain HTCC2594), this protein is 4-hydroxy-tetrahydrodipicolinate synthase.